The primary structure comprises 85 residues: Transcription factor 4 (85 aa).

The region spanning 7–60 is the bHLH domain; the sequence is ERRMANNARERLRVRDINEAFKELGRMVQLHLKSDKPQTKLLILHQAVAVILSL. The tract at residues 62-85 is class A specific domain; that stretch reads QQVRERNLNPKAACLKRREEEKVS.

In terms of assembly, efficient DNA binding requires dimerization with another bHLH protein. Forms homo- or heterooligomers with myogenin.

It is found in the nucleus. In terms of biological role, transcription factor that binds to the immunoglobulin enhancer Mu-E5/KE5-motif. Involved in the initiation of neuronal differentiation. Binds to the E-box present in the somatostatin receptor 2 initiator element (SSTR2-INR) to activate transcription. The sequence is that of Transcription factor 4 (TCF4) from Gallus gallus (Chicken).